We begin with the raw amino-acid sequence, 202 residues long: Stress enhanced protein 2, chloroplastic (202 aa).

The N-terminal 60 residues, 1 to 60, are a transit peptide targeting the chloroplast; it reads MAMATRAIRYQLPSPRFRAPRCESSEPIKQIQIQQRPRGGDLAENGKIVLQPRLCTLRSY. The next 2 membrane-spanning stretches (helical) occupy residues 111 to 131 and 142 to 162; these read LAMI…NSLF and AIGA…LTIS.

The protein belongs to the ELIP/psbS family.

The protein localises to the plastid. The protein resides in the chloroplast thylakoid membrane. May be involved in non-photochemical quenching, a process that maintains the balance between dissipation and utilization of light energy to minimize generation of oxidizing molecules, thereby protecting the plant against photo-oxidative damage. May play a photoprotective role in the thylakoid membrane in response to light stress. This is Stress enhanced protein 2, chloroplastic from Arabidopsis thaliana (Mouse-ear cress).